The chain runs to 285 residues: Probable endonuclease 4 (285 aa).

Zn(2+) contacts are provided by H69, H109, E145, D179, H182, H216, D229, H231, and E261.

Belongs to the AP endonuclease 2 family. It depends on Zn(2+) as a cofactor.

The enzyme catalyses Endonucleolytic cleavage to 5'-phosphooligonucleotide end-products.. In terms of biological role, endonuclease IV plays a role in DNA repair. It cleaves phosphodiester bonds at apurinic or apyrimidinic (AP) sites, generating a 3'-hydroxyl group and a 5'-terminal sugar phosphate. The polypeptide is Probable endonuclease 4 (Salmonella dublin (strain CT_02021853)).